A 459-amino-acid chain; its full sequence is MAPARTRVNSLNVAVIGAGAAGLVAARELRRENHTVVVFERDSKVGGLWVYTPNSEPDPLSLDPNRTIVHSSVYDSLRTNLPRECMGYRDFPFVPRPEDDESRDSRRYPSHREVLAYLEDFAREFKLVEMVRFKTEVVLVEPEDKKWRVQSKNSDGISKDEIFDAVVVCNGHYTEPRVAHVPGIDSWPGKQIHSHNYRVPDQFKDQVVVVIGNFASGADISRDITGVAKEVHIASRSNPSKTYSKLPGSNNLWLHSMIESVHEDGTIVFQNGKVVQADTIVHCTGYKYHFPFLNTNGYITVEDNCVGPLYEHVFPPALAPGLSFIGLPWMTLQFFMFELQSKWVAAALSGRVTLPSEEKMMEDVTAYYAKREAFGQPKRYTHRLGGGQVDYLNWIAEQIGAPPGEQWRYQEINGGYYRLATQSDTFRDKWDDDHLIVEAYEDFLRQKLISSLPSQLLES.

Position 17–22 (17–22 (GAGAAG)) interacts with FAD. 212–217 (GNFASG) contacts NADP(+).

It belongs to the FMO family.

It carries out the reaction a (Z)-omega-(methylsulfanyl)-N-sulfo-alkylhydroximate S-glucoside + NADPH + O2 + H(+) = a (Z)-omega-(methylsulfinyl)-alkyl-glucosinolate + NADP(+) + H2O. In terms of biological role, catalyzes the conversion of methylthioalkyl glucosinolates into methylsulfinylalkyl glucosinolates. Specific for 8-methylthiooctyl (8-MTO) glucosinolates. This chain is Flavin-containing monooxygenase FMO GS-OX5 (FMOGS-OX5), found in Arabidopsis thaliana (Mouse-ear cress).